Reading from the N-terminus, the 138-residue chain is MTKPIPRIGLRRNGRIGLRKNGRRISKGVIHVQASFNNTIVTVTDVRGRVVSWSSAGTCGFRGARRGTPFAAQTAAGNAIRTVVDQGMQRAEVMIKGPGLGRDAALRAIRRSGILLSFVRDVTPMPHNGCRPPKKRRV.

This sequence belongs to the universal ribosomal protein uS11 family. In terms of assembly, part of the 30S ribosomal subunit.

It is found in the plastid. The protein localises to the chloroplast. This is Small ribosomal subunit protein uS11c from Illicium oligandrum (Star anise).